Here is a 131-residue protein sequence, read N- to C-terminus: uncharacterized protein (131 aa).

This is an uncharacterized protein from Saccharomyces cerevisiae (strain ATCC 204508 / S288c) (Baker's yeast).